Reading from the N-terminus, the 122-residue chain is MAPKNEKKSRSTINEVVTREYTIHIHARIRGIGSKKRAPRAIDEIKKFAKIQMKTNDVRVDTKLNKFIWSKGIKNVPYRVRVRLSRRRNEDEDSAQKLYTLCTYVPCTNFHGLTNVNVDSEE.

Belongs to the eukaryotic ribosomal protein eL31 family.

The polypeptide is Large ribosomal subunit protein eL31 (Caenorhabditis elegans).